An 81-amino-acid chain; its full sequence is Photosystem I iron-sulfur center (81 aa).

2 consecutive 4Fe-4S ferredoxin-type domains span residues 2-31 and 39-68; these read AHSVKIYDTCIGCTQCVRACPTDVLEMIPW and IASAPRTEDCVGCKRCESACPTDFLSVRVY. Residues cysteine 11, cysteine 14, cysteine 17, cysteine 21, cysteine 48, cysteine 51, cysteine 54, and cysteine 58 each coordinate [4Fe-4S] cluster.

In terms of assembly, the eukaryotic PSI reaction center is composed of at least 11 subunits. The cofactor is [4Fe-4S] cluster.

It is found in the plastid. The protein resides in the chloroplast thylakoid membrane. It carries out the reaction reduced [plastocyanin] + hnu + oxidized [2Fe-2S]-[ferredoxin] = oxidized [plastocyanin] + reduced [2Fe-2S]-[ferredoxin]. In terms of biological role, apoprotein for the two 4Fe-4S centers FA and FB of photosystem I (PSI); essential for photochemical activity. FB is the terminal electron acceptor of PSI, donating electrons to ferredoxin. The C-terminus interacts with PsaA/B/D and helps assemble the protein into the PSI complex. Required for binding of PsaD and PsaE to PSI. PSI is a plastocyanin-ferredoxin oxidoreductase, converting photonic excitation into a charge separation, which transfers an electron from the donor P700 chlorophyll pair to the spectroscopically characterized acceptors A0, A1, FX, FA and FB in turn. The polypeptide is Photosystem I iron-sulfur center (Zygnema circumcarinatum (Green alga)).